The chain runs to 301 residues: MKFLSFRHEGQTSYGVKVKREEAAWDLKKVFADFAEGSFHPKTLLNGLQQNQVVDFQEQVRKAVVAAEDSGKGEDYKVQFSDIEFLPPVTPTNNVIAFGRNYQDHANELNHEVQRLYVFTKAASSLTGDNSTIPNHKDITDQLDYEGELGIVIGKSGEKIPKGLALDYVYGYTIINDITDRKAQNAQDQAFLSKSLTGGCPVGPYIVTKDELPTPEDVNIVTKVNNDIRQDGNTGQMILKIDELIEEISKYVALHPGDIIATGTPAGVGAGMNPPQFLQPGDEIKVTIDNIGTLTNFIADK.

Residues glutamate 146, glutamate 148, and aspartate 177 each contribute to the a divalent metal cation site.

Belongs to the FAH family.

This is an uncharacterized protein from Staphylococcus saprophyticus subsp. saprophyticus (strain ATCC 15305 / DSM 20229 / NCIMB 8711 / NCTC 7292 / S-41).